A 427-amino-acid chain; its full sequence is Dihydroorotase (427 aa).

His57 and His59 together coordinate Zn(2+). Residues 59-61 and Asn91 each bind substrate; that span reads HLR. The Zn(2+) site is built by Asp149, His176, and His229. Asn275 provides a ligand contact to substrate. Position 302 (Asp302) interacts with Zn(2+). Asp302 is a catalytic residue. Substrate contacts are provided by residues His306 and 320–321; that span reads FG.

It belongs to the metallo-dependent hydrolases superfamily. DHOase family. Class I DHOase subfamily. The cofactor is Zn(2+).

It carries out the reaction (S)-dihydroorotate + H2O = N-carbamoyl-L-aspartate + H(+). It functions in the pathway pyrimidine metabolism; UMP biosynthesis via de novo pathway; (S)-dihydroorotate from bicarbonate: step 3/3. Catalyzes the reversible cyclization of carbamoyl aspartate to dihydroorotate. This Shouchella clausii (strain KSM-K16) (Alkalihalobacillus clausii) protein is Dihydroorotase.